The following is a 217-amino-acid chain: Uracil-DNA glycosylase (217 aa).

Catalysis depends on Asp-62, which acts as the Proton acceptor.

This sequence belongs to the uracil-DNA glycosylase (UDG) superfamily. UNG family.

The protein localises to the cytoplasm. It catalyses the reaction Hydrolyzes single-stranded DNA or mismatched double-stranded DNA and polynucleotides, releasing free uracil.. In terms of biological role, excises uracil residues from the DNA which can arise as a result of misincorporation of dUMP residues by DNA polymerase or due to deamination of cytosine. The chain is Uracil-DNA glycosylase from Streptococcus pyogenes serotype M4 (strain MGAS10750).